A 617-amino-acid polypeptide reads, in one-letter code: Syncytin-A (617 aa).

A signal peptide spans methionine 1–alanine 17. Over tyrosine 18 to tryptophan 544 the chain is Extracellular. Asparagine 27 carries N-linked (GlcNAc...) asparagine glycosylation. A CXXC motif is present at residues cysteine 44 to cysteine 47. Intrachain disulfides connect cysteine 44-cysteine 47, cysteine 44-cysteine 505, and cysteine 497-cysteine 504. N-linked (GlcNAc...) asparagine glycosylation is found at asparagine 272 and asparagine 365. Positions leucine 420–isoleucine 440 are fusion peptide. Residues cysteine 497–cysteine 505 carry the CX6CC motif. A helical membrane pass occupies residues leucine 545–phenylalanine 565. The Cytoplasmic segment spans residues arginine 566–valine 617.

Belongs to the gamma type-C retroviral envelope protein family. As to quaternary structure, the mature protein consists of a trimer of SU-TM heterodimers. The SU-TM heterodimers are attached by a labile interchain disulfide bond. In terms of processing, synthesized as an inactive precursor that is heavily N-glycosylated and processed likely by furin in the Golgi to yield the mature SU and TM proteins. The cleavage site between SU and TM requires the minimal sequence [KR]-X-[KR]-R. The CXXC motif is highly conserved across a broad range of retroviral envelope proteins. It is thought to participate in the formation of a labile disulfide bond possibly with the CX6CC motif present in the transmembrane protein. Isomerization of the intersubunit disulfide bond to an SU intrachain disulfide bond is thought to occur upon receptor recognition in order to allow membrane fusion. In terms of tissue distribution, highly expressed in placenta where it localizes to syncytiotrophoblasts of the labyrinthine zona. Specifically localizes to syncytiotrophoblast layer I (SynT-I). Also detected at very low levels in hippocampus, brain, testis and ovary.

The protein resides in the cell membrane. This endogenous retroviral envelope protein has retained its original fusogenic properties. Together with Synb, participates in trophoblast fusion and the formation of a syncytium during placenta morphogenesis. Syna is essential for placental development and is specifically required for formation of syncytiotrophoblast layer I (SynT-I). Promotes muscle myoblast fusion. Does not have immunosuppressive activity. The chain is Syncytin-A from Mus musculus (Mouse).